The following is a 451-amino-acid chain: Chromosomal replication initiator protein DnaA (451 aa).

The segment at 1 to 72 is domain I, interacts with DnaA modulators; the sequence is MQSIEDIWQE…ANILQEITGR (72 aa). The tract at residues 72–108 is domain II; that stretch reads RLFDVRFIDGEQEENFEYTVIKPNPALDEDGIEIGKH. The tract at residues 109-325 is domain III, AAA+ region; it reads MLNPRYVFDT…GALIRVVAYS (217 aa). The ATP site is built by Gly153, Gly155, Lys156, and Thr157. Residues 326–451 are domain IV, binds dsDNA; that stretch reads SLVNKDITAG…KNLRKAQNMF (126 aa).

The protein belongs to the DnaA family. In terms of assembly, oligomerizes as a right-handed, spiral filament on DNA at oriC.

It localises to the cytoplasm. Functionally, plays an essential role in the initiation and regulation of chromosomal replication. ATP-DnaA binds to the origin of replication (oriC) to initiate formation of the DNA replication initiation complex once per cell cycle. Binds the DnaA box (a 9 base pair repeat at the origin) and separates the double-stranded (ds)DNA. Forms a right-handed helical filament on oriC DNA; dsDNA binds to the exterior of the filament while single-stranded (ss)DNA is stabiized in the filament's interior. The ATP-DnaA-oriC complex binds and stabilizes one strand of the AT-rich DNA unwinding element (DUE), permitting loading of DNA polymerase. After initiation quickly degrades to an ADP-DnaA complex that is not apt for DNA replication. Binds acidic phospholipids. The chain is Chromosomal replication initiator protein DnaA from Listeria monocytogenes serotype 4b (strain F2365).